The primary structure comprises 582 residues: ATP-dependent lipid A-core flippase (582 aa).

5 consecutive transmembrane segments (helical) span residues 16-36, 63-83, 153-173, 253-273, and 275-295; these read LWPT…ALIL, VLVW…ITSY, IIGL…ILIV, PIIQ…ASFP, and VMDS…IALM. Positions 28 to 310 constitute an ABC transmembrane type-1 domain; that stretch reads IVAGVALILN…LTNVNAQFQR (283 aa). Residues 342-578 form the ABC transporter domain; sequence VEFRNVTFTY…RGVYAQLHKM (237 aa). 376–383 contacts ATP; it reads GRSGSGKS.

It belongs to the ABC transporter superfamily. Lipid exporter (TC 3.A.1.106) family. As to quaternary structure, homodimer.

The protein localises to the cell inner membrane. It catalyses the reaction ATP + H2O + lipid A-core oligosaccharideSide 1 = ADP + phosphate + lipid A-core oligosaccharideSide 2.. Involved in lipopolysaccharide (LPS) biosynthesis. Translocates lipid A-core from the inner to the outer leaflet of the inner membrane. Transmembrane domains (TMD) form a pore in the inner membrane and the ATP-binding domain (NBD) is responsible for energy generation. The chain is ATP-dependent lipid A-core flippase from Escherichia coli O157:H7.